The chain runs to 301 residues: Homoserine O-acetyltransferase (301 aa).

Cysteine 142 serves as the catalytic Acyl-thioester intermediate. Lysine 163 and serine 192 together coordinate substrate. Histidine 235 acts as the Proton acceptor in catalysis. Glutamate 237 is an active-site residue. Arginine 249 contributes to the substrate binding site.

It belongs to the MetA family.

It localises to the cytoplasm. It carries out the reaction L-homoserine + acetyl-CoA = O-acetyl-L-homoserine + CoA. It participates in amino-acid biosynthesis; L-methionine biosynthesis via de novo pathway; O-acetyl-L-homoserine from L-homoserine: step 1/1. Its function is as follows. Transfers an acetyl group from acetyl-CoA to L-homoserine, forming acetyl-L-homoserine. The protein is Homoserine O-acetyltransferase of Bacillus cereus (strain 03BB102).